A 286-amino-acid chain; its full sequence is ATP synthase gamma chain (286 aa).

Belongs to the ATPase gamma chain family. As to quaternary structure, F-type ATPases have 2 components, CF(1) - the catalytic core - and CF(0) - the membrane proton channel. CF(1) has five subunits: alpha(3), beta(3), gamma(1), delta(1), epsilon(1). CF(0) has three main subunits: a, b and c.

The protein resides in the cell inner membrane. Functionally, produces ATP from ADP in the presence of a proton gradient across the membrane. The gamma chain is believed to be important in regulating ATPase activity and the flow of protons through the CF(0) complex. The protein is ATP synthase gamma chain of Marinomonas sp. (strain MWYL1).